Consider the following 324-residue polypeptide: ATP-dependent 6-phosphofructokinase (324 aa).

Gly11 contacts ATP. 21–25 (RAVVR) provides a ligand contact to ADP. Residues 72–73 (RE) and 102–105 (GNGS) each bind ATP. Residue Asn103 coordinates Mg(2+). 126 to 128 (TID) contributes to the substrate binding site. Residue Asp128 is the Proton acceptor of the active site. Arg155 contributes to the ADP binding site. Substrate is bound by residues Arg163 and 170 to 172 (MGR). ADP-binding positions include 186 to 188 (GAD), Arg212, and 214 to 216 (KKF). Substrate-binding positions include Glu223, Arg248, and 254-257 (YIQR).

This sequence belongs to the phosphofructokinase type A (PFKA) family. ATP-dependent PFK group I subfamily. Prokaryotic clade 'B1' sub-subfamily. Homotetramer. Requires Mg(2+) as cofactor.

It is found in the cytoplasm. It carries out the reaction beta-D-fructose 6-phosphate + ATP = beta-D-fructose 1,6-bisphosphate + ADP + H(+). The protein operates within carbohydrate degradation; glycolysis; D-glyceraldehyde 3-phosphate and glycerone phosphate from D-glucose: step 3/4. Its activity is regulated as follows. Allosterically activated by ADP and other diphosphonucleosides, and allosterically inhibited by phosphoenolpyruvate. Its function is as follows. Catalyzes the phosphorylation of D-fructose 6-phosphate to fructose 1,6-bisphosphate by ATP, the first committing step of glycolysis. In Persephonella marina (strain DSM 14350 / EX-H1), this protein is ATP-dependent 6-phosphofructokinase.